Consider the following 387-residue polypeptide: DNA double-strand break repair protein Mre11 (387 aa).

Positions 11, 13, 52, and 87 each coordinate Mn(2+). Histidine 88 functions as the Proton donor in the catalytic mechanism. Residues histidine 159, histidine 190, and histidine 192 each contribute to the Mn(2+) site.

Belongs to the MRE11/RAD32 family. As to quaternary structure, homodimer. Forms a heterotetramer composed of two Mre11 subunits and two Rad50 subunits. Interacts with HerA. Mn(2+) is required as a cofactor.

With respect to regulation, nuclease activity is regulated by Rad50. In terms of biological role, part of the Rad50/Mre11 complex, which is involved in the early steps of DNA double-strand break (DSB) repair. The complex may facilitate opening of the processed DNA ends to aid in the recruitment of HerA and NurA. Mre11 binds to DSB ends and has both double-stranded 3'-5' exonuclease activity and single-stranded endonuclease activity. The polypeptide is DNA double-strand break repair protein Mre11 (Sulfurisphaera tokodaii (strain DSM 16993 / JCM 10545 / NBRC 100140 / 7) (Sulfolobus tokodaii)).